The following is a 145-amino-acid chain: MSMPILKKENIVLHARVENKTEAIRLAGQILVNNGYVEDSYIDKMFEREALTSTYMGNFIAIPHGTEDAKQFVKHSGISIIQIPDGVDFGDGNIVKLLIGIAGKNNEHLEILSKIAIVCSEVENVETMIKAATEEEILSILNEVN.

The PTS EIIA type-2 domain occupies 4 to 144 (PILKKENIVL…EEILSILNEV (141 aa)). H64 acts as the Tele-phosphohistidine intermediate in catalysis. H64 carries the phosphohistidine; by HPr modification.

The protein resides in the cytoplasm. The phosphoenolpyruvate-dependent sugar phosphotransferase system (sugar PTS), a major carbohydrate active transport system, catalyzes the phosphorylation of incoming sugar substrates concomitantly with their translocation across the cell membrane. The enzyme II CmtAB PTS system is involved in D-mannitol transport. This chain is Mannitol-specific phosphotransferase enzyme IIA component, found in Geobacillus stearothermophilus (Bacillus stearothermophilus).